Consider the following 1117-residue polypeptide: PR domain zinc finger protein 10 (1117 aa).

Positions 97–142 are disordered; that stretch reads QQTPLGGLEAKEEEDEDEDEDTEEDEEEDGEDADLDDWEPDPPRPF. The segment covering 107–136 has biased composition (acidic residues); sequence KEEEDEDEDEDTEEDEEEDGEDADLDDWEP. The SET domain occupies 182-300; sequence LPLVLYIDRF…PKQELKVWYA (119 aa). The tract at residues 201 to 305 is N-terminal PR domain; essential for transcriptional activator activity; it reads IPKRTQLGPV…KVWYAASYAE (105 aa). The C2H2-type 1 zinc-finger motif lies at 329-351; sequence WPCYECNRRFISSEQLQQHLNSH. Lysine 354 participates in a covalent cross-link: Glycyl lysine isopeptide (Lys-Gly) (interchain with G-Cter in SUMO2). Residues 361-381 are compositionally biased toward basic residues; the sequence is TRGRGRGRGKRRFGPGRRPGR. Positions 361–386 are disordered; that stretch reads TRGRGRGRGKRRFGPGRRPGRPPKFI. At serine 398 the chain carries Phosphoserine. Threonine 402 is modified (phosphothreonine). The tract at residues 440-474 is disordered; the sequence is QETQSSLEHEPETHTLHLQPQHEESVVPTQSTLTA. Over residues 446 to 464 the composition is skewed to basic and acidic residues; it reads LEHEPETHTLHLQPQHEES. 9 C2H2-type zinc fingers span residues 500-522, 530-552, 558-580, 586-609, 614-636, 642-665, 697-720, 742-765, and 804-827; these read FKCLQCGKAFREKDKLDQHLRFH, LTCDLCNKGFISSASLESHMKLH, YSCIFCPESFDRLDLLKDHVAIH, FTCPTCKKRFPDFIQVKKHVRSFH, YQCTECDKAFCRPDKLRLHMLRH, FLCSTCGKQFKRKDKLREHMQRMH, FKCRLCMMGFRRRGMLVNHLSKRH, YFCQYCDKVYKSASKRKAHILKNH, and VCCPHCSKQYSSKTKMVQHIRKKH. The segment at 871–1097 is C-terminal glutamine-rich region; essential for transcriptional activator activity; that stretch reads QAMTELSQTL…QTTSQQQTTQ (227 aa). Disordered regions lie at residues 919–943, 958–1001, and 1066–1094; these read VAPATSPHQSQQSTVDVGQLHDPQP, GQPL…SSVQ, and QTSALSGGVQVQPPAHSDSLDPQTTSQQQ. Over residues 924–934 the composition is skewed to polar residues; it reads SPHQSQQSTVD.

The protein belongs to the class V-like SAM-binding methyltransferase superfamily.

Its subcellular location is the nucleus. Transcriptional activator, essential for early embryonic development and survival of embryonic stem cells (ESCs). Supports cell growth and survival during early development by transcriptionally activating the expression of the translation initiation factor EIF3B, to sustain global translation. Activates the transcription of FLNC. The chain is PR domain zinc finger protein 10 (PRDM10) from Pongo abelii (Sumatran orangutan).